The primary structure comprises 520 residues: Flavin-dependent halogenase radH (520 aa).

3 residues coordinate FAD: G14, A17, and E47. Chloride contacts are provided by S330 and G331.

This sequence belongs to the flavin-dependent halogenase family.

It functions in the pathway secondary metabolite biosynthesis. In terms of biological role, non-heme halogenase; part of the gene cluster that mediates the biosynthesis of radicicol, a resorcylic acid lactone (RAL) that irreversibly inhibits the HSP90 molecular chaperone, an important target for cancer chemotherapy. The cluster encodes only two apparent post-PKS enzymes, a cytochrome P450 monooxygenase (radP) and a non-heme halogenase (radH) that introduce the epoxide and the chlorine, respectively. If this cluster includes all the genes required for radicicol biosynthesis, the remaining structural features of radicicol are presumably generated by the PKSs rads1 and rads2. The C-2' ketone could arise if the R-PKS rads1 and NR-PKS rads2 each carry out four iterations, in contrast to the five iteration-three iteration split for the hypothemycin PKSs. The origin of the cis 5',6' double bond is not known. The radicicol R-PKS rads1 ER domain may catalyze either double bond isomerization or reduction in the third iteration. The polypeptide is Flavin-dependent halogenase radH (Floropilus chiversii (Chaetomium chiversii)).